A 473-amino-acid chain; its full sequence is Major myo-inositol transporter IolT (473 aa).

Helical transmembrane passes span 14 to 34 (IILVSTFGGLLFGYDTGVLNG), 49 to 69 (AFTEGLVTSSLLFGAALGAVF), 83 to 103 (ILFLAVIFFISTIGCTFAPNV), 111 to 131 (FVLGIAVGGASVTVPAYLAEM), 146 to 166 (LMIVSGQLLAFVFNAILGTTM), 172 to 192 (VWRFMLVIASLPALFLFFGMI), 256 to 276 (IVFIGLGIAIVQQITGVNSIM), 295 to 315 (IGNIANGVISVLATFVGIWLL), 325 to 345 (MTGLIGTTTALLLIGIFSLVL), 350 to 370 (ALPYVVLSLTVTFLAFQQGAI), 389 to 409 (LGMGVTVFCLWMVNFAVSFTF), and 411 to 431 (ILLAAIGLSTTFFIFVGLGIC).

It belongs to the major facilitator superfamily. Sugar transporter (TC 2.A.1.1) family.

The protein localises to the cell membrane. It participates in polyol metabolism; myo-inositol degradation into acetyl-CoA. Major myo-inositol uptake transporter. This chain is Major myo-inositol transporter IolT (iolT), found in Bacillus subtilis (strain 168).